Consider the following 446-residue polypeptide: Glutamate-1-semialdehyde 2,1-aminomutase (446 aa).

An N6-(pyridoxal phosphate)lysine modification is found at lysine 278.

It belongs to the class-III pyridoxal-phosphate-dependent aminotransferase family. HemL subfamily. As to quaternary structure, homodimer. Requires pyridoxal 5'-phosphate as cofactor.

It is found in the cytoplasm. It carries out the reaction (S)-4-amino-5-oxopentanoate = 5-aminolevulinate. The protein operates within porphyrin-containing compound metabolism; protoporphyrin-IX biosynthesis; 5-aminolevulinate from L-glutamyl-tRNA(Glu): step 2/2. The chain is Glutamate-1-semialdehyde 2,1-aminomutase from Deinococcus geothermalis (strain DSM 11300 / CIP 105573 / AG-3a).